The primary structure comprises 570 residues: MSEKHPGPLVVEGKLTDAERMKLESNYLRGTIAEDLNDGLTGGFKGDNFLLIRFHGMYQQDDRDIRAERAEQKLEPRHAMLLRCRLPGGVITTKQWQAIDKFAGENTIYGSIRLTNRQTFQFHGILKKNVKPVHQMLHSVGLDALATANDMNRNVLCTSNPYESQLHAEAYEWAKKISEHLLPRTRAYAEIWLDQEKVATTDEEPILGQTYLPRKFKTTVVIPPQNDIDLHANDMNFVAIAENGKLVGFNLLVGGGLSIEHGNKKTYARTASEFGYLPLEHTLAVAEAVVTTQRDWGNRTDRKNAKTKYTLERVGVETFKAEVERRAGIKFEPIRPYEFTGRGDRIGWVKGIDDNWHLTLFIENGRILDYPGRPLKTGLLEIAKIHKGDFRITANQNLIIAGVPESEKAKIEKIAKESGLMNAVTPQRENSMACVSFPTCPLAMAEAERFLPSFIDNIDNLMVKHGVSDEHIVMRVTGCPNGCGRAMLAEVGLVGKAPGRYNLHLGGNRIGTRIPRMYKENITEPEILASLDELIGRWAKEREAGEGFGDFTVRAGIIRPVLDPARDLWD.

4 residues coordinate [4Fe-4S] cluster: Cys434, Cys440, Cys479, and Cys483. Siroheme is bound at residue Cys483.

It belongs to the nitrite and sulfite reductase 4Fe-4S domain family. As to quaternary structure, alpha(8)-beta(8). The alpha component is a flavoprotein, the beta component is a hemoprotein. Requires siroheme as cofactor. [4Fe-4S] cluster is required as a cofactor.

The enzyme catalyses hydrogen sulfide + 3 NADP(+) + 3 H2O = sulfite + 3 NADPH + 4 H(+). Its pathway is sulfur metabolism; hydrogen sulfide biosynthesis; hydrogen sulfide from sulfite (NADPH route): step 1/1. Functionally, component of the sulfite reductase complex that catalyzes the 6-electron reduction of sulfite to sulfide. This is one of several activities required for the biosynthesis of L-cysteine from sulfate. In Shigella flexneri, this protein is Sulfite reductase [NADPH] hemoprotein beta-component.